A 330-amino-acid polypeptide reads, in one-letter code: Membrane progestin receptor gamma (330 aa).

Residues 1-51 (MLSLKLPRLFRIDQVPQVFHEQGILFGYRHPQSSATACILSLFQMTNETLN) lie on the Cytoplasmic side of the membrane. Residues 52 to 72 (IWTHLLPFWFFVWRFMTALYV) traverse the membrane as a helical segment. The Extracellular segment spans residues 73–81 (TDIQNDSYS). A helical membrane pass occupies residues 82 to 101 (WPMLVYMCTSCVYPLASSCA). Over 102-113 (HTFSSMSKNARH) the chain is Cytoplasmic. The chain crosses the membrane as a helical span at residues 114 to 134 (ICYFLDYGAVNLFSLGSAIAY). Residues 135–141 (SAYTFPD) lie on the Extracellular side of the membrane. Residues 142–162 (ALVCSTFHECYVALAVLNTIL) traverse the membrane as a helical segment. Residues 163 to 186 (STGLSCYSRFLELQKPRLCKLLRV) lie on the Cytoplasmic side of the membrane. The helical transmembrane segment at 187-207 (LAFAYPYTWDSLPIFYRLFLF) threads the bilayer. At 208-253 (PGESSRNEAMLYHQKHMGMTLLASFFYSAHLPERLAPGRFDYIGHS) the chain is on the extracellular side. Residues 254 to 274 (HQLFHVCVILATHLQMEAILL) traverse the membrane as a helical segment. The Cytoplasmic segment spans residues 275–294 (DKTLRREWLLATSRPFSFPQ). A helical transmembrane segment spans residues 295–315 (IAAAMLLCIIFSLSNIIYFSA). At 316-330 (ALYRIPEPELHEKET) the chain is on the extracellular side.

It belongs to the ADIPOR family.

It is found in the cell membrane. In terms of biological role, plasma membrane progesterone (P4) receptor coupled to G proteins. Seems to act through a G(i) mediated pathway. May be involved in oocyte maturation. This Mus musculus (Mouse) protein is Membrane progestin receptor gamma.